A 215-amino-acid polypeptide reads, in one-letter code: Glutathione S-transferase D6 (215 aa).

Residues 1 to 80 (MDLYNMSGSP…YLVEQYGKDD (80 aa)) enclose the GST N-terminal domain. Residues S9, 50–52 (HTI), and 64–66 (ETR) each bind glutathione. A GST C-terminal domain is found at 86–206 (DPQKQALINQ…LARIQSAKKF (121 aa)).

It belongs to the GST superfamily. Delta family. In terms of assembly, homodimer.

It carries out the reaction RX + glutathione = an S-substituted glutathione + a halide anion + H(+). In terms of biological role, conjugation of reduced glutathione to a wide number of exogenous and endogenous hydrophobic electrophiles. May be involved in detoxification. The protein is Glutathione S-transferase D6 of Drosophila melanogaster (Fruit fly).